A 349-amino-acid chain; its full sequence is Autophagy-related protein 3 (349 aa).

Residues 95–173 (ALVNDGDDFK…IRDSGADSKN (79 aa)) form a flexible region region. Catalysis depends on Cys-244, which acts as the Glycyl thioester intermediate. Residues 248–325 (SVMKTLLDRA…DQEVAIRVDQ (78 aa)) are handle region. The short motif at 306 to 309 (WEEV) is the ATG8 interaction motif (AIM) element.

This sequence belongs to the ATG3 family. In terms of assembly, monomer. Interacts with ATG8 through an intermediate thioester bond between Cys-244 and the C-terminal Gly of ATG8. Interacts with the C-terminal region of the E1-like ATG7 enzyme. Also interacts with the ATG12-ATG5 conjugate.

Its subcellular location is the cytoplasm. In terms of biological role, E2 conjugating enzyme required for the cytoplasm to vacuole transport (Cvt) and autophagy. Required for selective autophagic degradation of the nucleus (nucleophagy) as well as for mitophagy which contributes to regulate mitochondrial quantity and quality by eliminating the mitochondria to a basal level to fulfill cellular energy requirements and preventing excess ROS production. Responsible for the E2-like covalent binding of phosphatidylethanolamine to the C-terminal Gly of ATG8. The ATG12-ATG5 conjugate plays a role of an E3 and promotes the transfer of ATG8 from ATG3 to phosphatidylethanolamine (PE). This step is required for the membrane association of ATG8. The formation of the ATG8-phosphatidylethanolamine conjugate is essential for autophagy and for the cytoplasm to vacuole transport (Cvt). The ATG8-PE conjugate mediates tethering between adjacent membranes and stimulates membrane hemifusion, leading to expansion of the autophagosomal membrane during autophagy. Autophagy is required for proper vegetative growth, asexual/sexual reproduction, and full virulence. Autophagy is particularly involved in the biosynthesis of deoxynivalenol (DON), an important virulence determinant. The chain is Autophagy-related protein 3 from Gibberella zeae (strain ATCC MYA-4620 / CBS 123657 / FGSC 9075 / NRRL 31084 / PH-1) (Wheat head blight fungus).